Reading from the N-terminus, the 620-residue chain is MGKVIGIDLGTTNSAMAVYEGNEAKIIANKEGKNTTPSIVAFTDKGEILVGESAKRQAVTNPEKTIYSIKRIMGLMFNEDKAKEAEKRLPYKIVDRNGACAIEISGKVYTPQEISAKILMKLKEDAESYLGESVTEAVITVPAYFNDSQRKATKEAGTIAGLNVLRIINEPTSAALAYGLDKKESEKIMVYDLGGGTFDVTVLETGDNVVEVLATGGDAFLGGDDFDNRVIDFLSAEFKSETGIEIKNDVMALQRLKEAAENAKKELSSAMETEINLPFITADATGPKHLVKKLTRAKFESLTEDLMEETISKIESVIKDAGLTKNEISEVVMVGGSTRIPKVQERVKAFINKDLNKSVNPDEVVAVGASIQGGVLKGDVKDVLLLDVTPLSLGIETLGGVMTKVIDRGTTIPAKKSQVFSTAEDNQPAVSIMVLQGERELARDNKSLGKFDLQGIAPAPRGVPQIEVTFDIDANGILTVSAQDKNTGKSQEIKISGSSGLSDSEIEKMVKDAELHKEEDARKKEVIEARNHADSLAHQTQKSLDEHKTNLNENDANEIQNAINALKDCIKNDNATKAELEDKTKLLAQAAQKLGEAMANKNNAEQPKKKDDDVIDAEVE.

Thr-197 carries the phosphothreonine; by autocatalysis modification. The disordered stretch occupies residues 597–620 (AMANKNNAEQPKKKDDDVIDAEVE).

It belongs to the heat shock protein 70 family.

Functionally, acts as a chaperone. The polypeptide is Chaperone protein DnaK (Helicobacter pylori (strain G27)).